Consider the following 311-residue polypeptide: Urease accessory protein UreD 2 (311 aa).

Belongs to the UreD family. In terms of assembly, ureD, UreF and UreG form a complex that acts as a GTP-hydrolysis-dependent molecular chaperone, activating the urease apoprotein by helping to assemble the nickel containing metallocenter of UreC. The UreE protein probably delivers the nickel.

The protein localises to the cytoplasm. Functionally, required for maturation of urease via the functional incorporation of the urease nickel metallocenter. This chain is Urease accessory protein UreD 2, found in Methylorubrum extorquens (strain PA1) (Methylobacterium extorquens).